The sequence spans 100 residues: Small ribosomal subunit protein uS14c (100 aa).

Belongs to the universal ribosomal protein uS14 family. In terms of assembly, part of the 30S ribosomal subunit.

The protein localises to the plastid. Its subcellular location is the chloroplast. Binds 16S rRNA, required for the assembly of 30S particles. This is Small ribosomal subunit protein uS14c from Rhodomonas salina (Cryptomonas salina).